The primary structure comprises 667 residues: Sorting nexin mvp1 (667 aa).

The segment at 221 to 268 (AGNLHSQQPPKFSVDSSVDDNAITPRKPFSKIPNRLSPSTQPLLSNSR) is disordered. Residues 224-236 (LHSQQPPKFSVDS) show a composition bias toward polar residues. Residues 279 to 398 (TSFPASLEMN…RVFFTEPNVF (120 aa)) enclose the PX domain. 3 residues coordinate a 1,2-diacyl-sn-glycero-3-phospho-(1D-myo-inositol-3-phosphate): R320, S322, and K346. A disordered region spans residues 574-594 (ANSDESGRNRTFLNRSSKKRA).

It belongs to the sorting nexin family. Homodimer. Forms an autoinhibited tetramer consisting of 2 homodimers that self-interact, wherein the membrane-interacting BAR surfaces are sequestered and the PX lipid-binding sites are occluded. Interacts with Vps1.

The protein localises to the cytoplasm. The protein resides in the endosome membrane. Required for vacuolar protein sorting. Component of the retromer-mediated endosome-to-Golgi retrograde pathway. Required for efficient cargo export from the endosome, promoting Vps1-mediated fission of retromer-coated tubules that bud from the endosome. The chain is Sorting nexin mvp1 (mvp1) from Schizosaccharomyces pombe (strain 972 / ATCC 24843) (Fission yeast).